The primary structure comprises 77 residues: U8-lycotoxin-Ls1m (77 aa).

The N-terminal stretch at 1-20 (MKLMIFTGLFLFAIVSLIEA) is a signal peptide. Positions 21-26 (QAENEK) are excised as a propeptide.

The protein belongs to the neurotoxin 19 (CSTX) family. 08 (U8-Lctx) subfamily. In terms of processing, contains 4 disulfide bonds. In terms of tissue distribution, expressed by the venom gland.

It localises to the secreted. The sequence is that of U8-lycotoxin-Ls1m from Lycosa singoriensis (Wolf spider).